A 1029-amino-acid chain; its full sequence is Carbamoyl phosphate synthase large chain (1029 aa).

Positions Met-1 to Glu-402 are carboxyphosphate synthetic domain. ATP contacts are provided by Arg-129, Arg-169, Gly-175, Gly-176, Glu-208, Ile-210, Glu-215, Gly-241, Val-242, His-243, Gln-285, and Glu-299. An ATP-grasp 1 domain is found at Gln-133–Val-328. Residues Gln-285, Glu-299, and Asn-301 each contribute to the Mg(2+) site. 3 residues coordinate Mn(2+): Gln-285, Glu-299, and Asn-301. Positions Ser-403 to Val-546 are oligomerization domain. Residues Thr-547–Lys-929 are carbamoyl phosphate synthetic domain. The 193-residue stretch at Asn-671–Val-863 folds into the ATP-grasp 2 domain. Residues Arg-707, Gln-747, Leu-749, Glu-754, Gly-779, Val-780, His-781, Ser-782, Gln-822, and Glu-834 each coordinate ATP. Positions 822, 834, and 836 each coordinate Mg(2+). Gln-822, Glu-834, and Asn-836 together coordinate Mn(2+). The 99-residue stretch at Ser-930–Ala-1028 folds into the MGS-like domain. The interval Ser-930–Ser-1029 is allosteric domain.

The protein belongs to the CarB family. In terms of assembly, composed of two chains; the small (or glutamine) chain promotes the hydrolysis of glutamine to ammonia, which is used by the large (or ammonia) chain to synthesize carbamoyl phosphate. Tetramer of heterodimers (alpha,beta)4. Requires Mg(2+) as cofactor. Mn(2+) is required as a cofactor.

It catalyses the reaction hydrogencarbonate + L-glutamine + 2 ATP + H2O = carbamoyl phosphate + L-glutamate + 2 ADP + phosphate + 2 H(+). The enzyme catalyses hydrogencarbonate + NH4(+) + 2 ATP = carbamoyl phosphate + 2 ADP + phosphate + 2 H(+). Its pathway is amino-acid biosynthesis; L-arginine biosynthesis; carbamoyl phosphate from bicarbonate: step 1/1. It participates in pyrimidine metabolism; UMP biosynthesis via de novo pathway; (S)-dihydroorotate from bicarbonate: step 1/3. Functionally, large subunit of the glutamine-dependent carbamoyl phosphate synthetase (CPSase). CPSase catalyzes the formation of carbamoyl phosphate from the ammonia moiety of glutamine, carbonate, and phosphate donated by ATP, constituting the first step of 2 biosynthetic pathways, one leading to arginine and/or urea and the other to pyrimidine nucleotides. The large subunit (synthetase) binds the substrates ammonia (free or transferred from glutamine from the small subunit), hydrogencarbonate and ATP and carries out an ATP-coupled ligase reaction, activating hydrogencarbonate by forming carboxy phosphate which reacts with ammonia to form carbamoyl phosphate. The chain is Carbamoyl phosphate synthase large chain from Deinococcus geothermalis (strain DSM 11300 / CIP 105573 / AG-3a).